Here is a 430-residue protein sequence, read N- to C-terminus: Probable dual-specificity RNA methyltransferase RlmN (430 aa).

E125 serves as the catalytic Proton acceptor. Residues 152–395 (RHGRVTLCVS…VTVRDTRGRE (244 aa)) form the Radical SAM core domain. C159 and C400 are disulfide-bonded. Residues C166, C170, and C173 each contribute to the [4Fe-4S] cluster site. S-adenosyl-L-methionine is bound by residues 221–222 (GE), S255, 278–280 (SLH), and N357. The S-methylcysteine intermediate role is filled by C400.

The protein belongs to the radical SAM superfamily. RlmN family. [4Fe-4S] cluster serves as cofactor.

The protein resides in the cytoplasm. The catalysed reaction is adenosine(2503) in 23S rRNA + 2 reduced [2Fe-2S]-[ferredoxin] + 2 S-adenosyl-L-methionine = 2-methyladenosine(2503) in 23S rRNA + 5'-deoxyadenosine + L-methionine + 2 oxidized [2Fe-2S]-[ferredoxin] + S-adenosyl-L-homocysteine. The enzyme catalyses adenosine(37) in tRNA + 2 reduced [2Fe-2S]-[ferredoxin] + 2 S-adenosyl-L-methionine = 2-methyladenosine(37) in tRNA + 5'-deoxyadenosine + L-methionine + 2 oxidized [2Fe-2S]-[ferredoxin] + S-adenosyl-L-homocysteine. Specifically methylates position 2 of adenine 2503 in 23S rRNA and position 2 of adenine 37 in tRNAs. The sequence is that of Probable dual-specificity RNA methyltransferase RlmN from Acidothermus cellulolyticus (strain ATCC 43068 / DSM 8971 / 11B).